The primary structure comprises 126 residues: Protein ApaG (126 aa).

An ApaG domain is found at 2-126; the sequence is DVSLPCIKIQ…FRLAVPHVLN (125 aa).

This is Protein ApaG from Vibrio cholerae serotype O1 (strain ATCC 39541 / Classical Ogawa 395 / O395).